The following is a 158-amino-acid chain: 6,7-dimethyl-8-ribityllumazine synthase (158 aa).

5-amino-6-(D-ribitylamino)uracil is bound by residues Phe-23, 57–59, and 81–83; these read AFE and TVI. 86 to 87 serves as a coordination point for (2S)-2-hydroxy-3-oxobutyl phosphate; that stretch reads GT. His-89 (proton donor) is an active-site residue. Residue Phe-114 coordinates 5-amino-6-(D-ribitylamino)uracil. Arg-128 provides a ligand contact to (2S)-2-hydroxy-3-oxobutyl phosphate.

This sequence belongs to the DMRL synthase family.

It carries out the reaction (2S)-2-hydroxy-3-oxobutyl phosphate + 5-amino-6-(D-ribitylamino)uracil = 6,7-dimethyl-8-(1-D-ribityl)lumazine + phosphate + 2 H2O + H(+). It functions in the pathway cofactor biosynthesis; riboflavin biosynthesis; riboflavin from 2-hydroxy-3-oxobutyl phosphate and 5-amino-6-(D-ribitylamino)uracil: step 1/2. In terms of biological role, catalyzes the formation of 6,7-dimethyl-8-ribityllumazine by condensation of 5-amino-6-(D-ribitylamino)uracil with 3,4-dihydroxy-2-butanone 4-phosphate. This is the penultimate step in the biosynthesis of riboflavin. The sequence is that of 6,7-dimethyl-8-ribityllumazine synthase from Desulforudis audaxviator (strain MP104C).